A 716-amino-acid chain; its full sequence is Fusoxypene synthase (716 aa).

Positions 4–328 (LSYQSRLIPP…WLSACSRQNT (325 aa)) are sesterterpenoid synthase. Asp96 contacts Mg(2+). Asp96 is a binding site for substrate. The tract at residues 187 to 190 (RMTN) is substrate. Residue Asn231 coordinates substrate. Positions 235–239 (SYERE) are substrate. The interval 329 to 711 (WKTNCSIDGK…CLATLSMEGC (383 aa)) is geranylfarnesyl diphosphate synthase. Isopentenyl diphosphate contacts are provided by Lys422, Arg425, and His454. 2 residues coordinate Mg(2+): Asp461 and Asp465. Arg470 provides a ligand contact to dimethylallyl diphosphate. Residue Arg471 coordinates isopentenyl diphosphate. Positions 548, 549, 587, 594, and 602 each coordinate dimethylallyl diphosphate.

It in the N-terminal section; belongs to the terpene synthase family. In the C-terminal section; belongs to the FPP/GGPP synthase family.

The catalysed reaction is 4 isopentenyl diphosphate + dimethylallyl diphosphate = (2E,6E,10E,14E)-geranylfarnesyl diphosphate + 4 diphosphate. It carries out the reaction (2E,6E,10E,14E)-geranylfarnesyl diphosphate = fusoxypene A + diphosphate. The enzyme catalyses (2E,6E,10E,14E)-geranylfarnesyl diphosphate = fusoxypene B + diphosphate. It catalyses the reaction (2E,6E,10E,14E)-geranylfarnesyl diphosphate = fusoxypene C + diphosphate. The catalysed reaction is (2E,6E,10E,14E)-geranylfarnesyl diphosphate = (-)-astellatene + diphosphate. Functionally, bifunctional sesterterpenoid synthase that performs both prenyl transferase and terpene cyclase activity, converting isopentenyl diphosphate and dimethylallyl diphosphate into geranylfarnesyl diphosphate (GFPP) and then converting GFPP into the enantiomeric sesterterpenes with a 5-6-7-3-5 ring system fusoxypene A, fusoxypene B, fusoxypene C and (-)-astellatene. This Fusarium oxysporum (Fusarium vascular wilt) protein is Fusoxypene synthase.